The following is a 378-amino-acid chain: Small RNA 2'-O-methyltransferase (378 aa).

D61 is a binding site for S-adenosyl-L-methionine. Mg(2+) contacts are provided by E114, E117, H118, and H176.

It belongs to the methyltransferase superfamily. HEN1 family. The cofactor is Mg(2+).

It is found in the cytoplasm. The catalysed reaction is small RNA 3'-end nucleotide + S-adenosyl-L-methionine = small RNA 3'-end 2'-O-methylnucleotide + S-adenosyl-L-homocysteine + H(+). Methyltransferase that adds a 2'-O-methyl group at the 3'-end of small RNAs. The protein is Small RNA 2'-O-methyltransferase of Schizosaccharomyces pombe (strain 972 / ATCC 24843) (Fission yeast).